We begin with the raw amino-acid sequence, 307 residues long: Taste receptor type 2 member 10 (307 aa).

At 1–6 (MLRVVE) the chain is on the extracellular side. A helical transmembrane segment spans residues 7 to 27 (GIFIFVVVSESVFGVLGNGFI). The Cytoplasmic segment spans residues 28–42 (GLVNCIDCAKNKLST). A helical membrane pass occupies residues 43–63 (IGFILTGLAISRIFLIWIIIT). The Extracellular portion of the chain corresponds to 64–100 (DGFIQIFSPNIYASGNLIEYISYFWVIGNQSSMWFAT). The N-linked (GlcNAc...) asparagine glycan is linked to N92. A helical transmembrane segment spans residues 101-121 (SLSIFYFLKIANFSNYIFLWL). Residues 122–126 (KSRTN) are Cytoplasmic-facing. A helical transmembrane segment spans residues 127 to 147 (MVLPFMIVFLLISSLLNFAYI). Topologically, residues 148–179 (AKILNDYKTKNDTVWDLNMYKSEYFIKQILLN) are extracellular. A glycan (N-linked (GlcNAc...) asparagine) is linked at N158. The helical transmembrane segment at 180–200 (LGVIFFFTLSLITCIFLIISL) threads the bilayer. At 201-227 (WRHNRQMQSNVTGLRDSNTEAHVKAMK) the chain is on the cytoplasmic side. Residues 228-248 (VLISFIILFILYFIGMAIEIS) traverse the membrane as a helical segment. At 249–257 (CFTVRENKL) the chain is on the extracellular side. A helical membrane pass occupies residues 258–278 (LLMFGMTTTAIYPWGHSFILI). Over 279–307 (LGNSKLKQASLRVLQQLKCCEKRKNLRVT) the chain is Cytoplasmic.

The protein belongs to the G-protein coupled receptor T2R family. As to expression, expressed in subsets of taste receptor cells of the tongue and palate epithelium and exclusively in gustducin-positive cells.

The protein localises to the membrane. Functionally, gustducin-coupled strychnine receptor implicated in the perception of bitter compounds in the oral cavity and the gastrointestinal tract. Signals through PLCB2 and the calcium-regulated cation channel TRPM5. The sequence is that of Taste receptor type 2 member 10 (TAS2R10) from Homo sapiens (Human).